Consider the following 156-residue polypeptide: Deoxyuridine 5'-triphosphate nucleotidohydrolase (156 aa).

Substrate contacts are provided by residues 76–78 (RSG), Asn-89, 93–95 (TVD), and Lys-103.

This sequence belongs to the dUTPase family. Mg(2+) is required as a cofactor.

The enzyme catalyses dUTP + H2O = dUMP + diphosphate + H(+). It participates in pyrimidine metabolism; dUMP biosynthesis; dUMP from dCTP (dUTP route): step 2/2. In terms of biological role, this enzyme is involved in nucleotide metabolism: it produces dUMP, the immediate precursor of thymidine nucleotides and it decreases the intracellular concentration of dUTP so that uracil cannot be incorporated into DNA. The polypeptide is Deoxyuridine 5'-triphosphate nucleotidohydrolase (Rhizobium johnstonii (strain DSM 114642 / LMG 32736 / 3841) (Rhizobium leguminosarum bv. viciae)).